Reading from the N-terminus, the 142-residue chain is Hemoglobin subunit alpha (142 aa).

S1 is modified (N-acetylserine). The Globin domain maps to 1–142; the sequence is SLTAKSKSIV…VASALSEKYR (142 aa). H59 contributes to the O2 binding site. H88 contacts heme b.

It belongs to the globin family. In terms of assembly, heterotetramer of two alpha chains and two beta chains. As to expression, red blood cells.

Functionally, involved in oxygen transport from gills to the various peripheral tissues. In Electrophorus electricus (Electric eel), this protein is Hemoglobin subunit alpha (hba).